Consider the following 150-residue polypeptide: 3-hydroxyacyl-[acyl-carrier-protein] dehydratase FabZ (150 aa).

Residue His51 is part of the active site.

Belongs to the thioester dehydratase family. FabZ subfamily.

The protein resides in the cytoplasm. The enzyme catalyses a (3R)-hydroxyacyl-[ACP] = a (2E)-enoyl-[ACP] + H2O. In terms of biological role, involved in unsaturated fatty acids biosynthesis. Catalyzes the dehydration of short chain beta-hydroxyacyl-ACPs and long chain saturated and unsaturated beta-hydroxyacyl-ACPs. The polypeptide is 3-hydroxyacyl-[acyl-carrier-protein] dehydratase FabZ (Geobacter metallireducens (strain ATCC 53774 / DSM 7210 / GS-15)).